Consider the following 128-residue polypeptide: Arsenic resistance transcriptional regulator ArsR1 (128 aa).

Residues 11-103 (MREILTPPIV…AMLKGVVDAN (93 aa)) enclose the HTH arsR-type domain. Arsenite is bound by residues C43 and C45. Residues 44–67 (VCELTHALELSQPKISRHLAQLRE) constitute a DNA-binding region (H-T-H motif).

As to quaternary structure, homodimer.

The protein resides in the cytoplasm. In terms of biological role, binds arsenite and regulates the expression of arsenic efflux pumps. In vitro, also binds antimony and bismuth, but not arsenate. The polypeptide is Arsenic resistance transcriptional regulator ArsR1 (Pseudomonas putida (strain ATCC 47054 / DSM 6125 / CFBP 8728 / NCIMB 11950 / KT2440)).